The following is a 121-amino-acid chain: Large ribosomal subunit protein bL12 (121 aa).

The protein belongs to the bacterial ribosomal protein bL12 family. In terms of assembly, homodimer. Part of the ribosomal stalk of the 50S ribosomal subunit. Forms a multimeric L10(L12)X complex, where L10 forms an elongated spine to which 2 to 4 L12 dimers bind in a sequential fashion. Binds GTP-bound translation factors.

Forms part of the ribosomal stalk which helps the ribosome interact with GTP-bound translation factors. Is thus essential for accurate translation. In Tolumonas auensis (strain DSM 9187 / NBRC 110442 / TA 4), this protein is Large ribosomal subunit protein bL12.